Reading from the N-terminus, the 310-residue chain is Chromatin modification-related protein EAF3 (310 aa).

A Tudor-knot domain is found at Lys8–Arg80. Residues Ala104–Gln128 are disordered. The span at Pro118–Ala127 shows a compositional bias: low complexity. An MRG domain is found at Gln128–Leu308.

This sequence belongs to the MRG family. In terms of assembly, component of the NuA4 histone acetyltransferase complex.

It is found in the nucleus. Involved in deacetylation of histones, chromatin assembly and chromosome segregation. May act as a transcriptional oscillator, directing histone deacetylases to specific chromosomal domains. Component of the NuA4 histone acetyltransferase complex which is involved in transcriptional activation of selected genes principally by acetylation of nucleosomal histone H4 and H2A. The NuA4 complex is also involved in DNA repair. In Eremothecium gossypii (strain ATCC 10895 / CBS 109.51 / FGSC 9923 / NRRL Y-1056) (Yeast), this protein is Chromatin modification-related protein EAF3 (EAF3).